A 528-amino-acid polypeptide reads, in one-letter code: MFGAAGRQPIGAPAAGNSWHFSRTMEELVHDLVSALEESSEQARGGFAETGDHSRSISCPLKRQARKRRGRKRRSYNVHHPWETGHCLSEGSDSSLEEPSKDYRENHNNNKKDHSDSDDQMLVAKRRPSSNLNNNVRGKRPLWHESDFAVDNVGNRTLRRRRKVKRMAVDLPQDISNKRTMTQPPEGCRDQDMDSDRAYQYQEFTKNKVKKRKLKIIRQGPKIQDEGVVLESEETNQTNKDKMECEEQKVSDELMSESDSSSLSSTDAGLFTNDEGRQGDDEQSDWFYEKESGGACGITGVVPWWEKEDPTELDKNVPDPVFESILTGSFPLMSHPSRRGFQARLSRLHGMSSKNIKKSGGTPTSMVPIPGPVGNKRMVHFSPDSHHHDHWFSPGARTEHDQHQLLRDNRAERGHKKNCSVRTASRQTSMHLGSLCTGDIKRRRKAAPLPGPTTAGFVGENAQPILENNIGNRMLQNMGWTPGSGLGRDGKGISEPIQAMQRPKGLGLGFPLPKSTSATTTPNAGKSA.

The disordered stretch occupies residues 36-119; the sequence is LEESSEQARG…NKKDHSDSDD (84 aa). A compositionally biased stretch (basic residues) spans 63–77; that stretch reads RQARKRRGRKRRSYN. Basic and acidic residues predominate over residues 98-117; sequence EPSKDYRENHNNNKKDHSDS. A phosphoserine mark is found at Ser-115, Ser-117, Ser-146, and Ser-195. Disordered stretches follow at residues 232-282 and 487-528; these read SEET…GDDE and GRDG…GKSA. The span at 239–252 shows a compositional bias: basic and acidic residues; the sequence is NKDKMECEEQKVSD. Positions 467-513 constitute a G-patch domain; sequence ENNIGNRMLQNMGWTPGSGLGRDGKGISEPIQAMQRPKGLGLGFPLP. Positions 514-528 are enriched in polar residues; that stretch reads KSTSATTTPNAGKSA.

Interacts with DHX15. In terms of tissue distribution, testis.

The protein resides in the nucleus speckle. Its subcellular location is the nucleus. It is found in the nucleolus. In terms of biological role, enhances the ATPase activity of DHX15 in vitro. The sequence is that of G patch domain-containing protein 2 (GPATCH2) from Homo sapiens (Human).